The chain runs to 325 residues: NADH-quinone oxidoreductase subunit H (325 aa).

The next 9 membrane-spanning stretches (helical) occupy residues 11-31, 50-69, 81-101, 114-134, 154-174, 186-206, 237-257, 265-285, and 304-324; these read ILLS…CGAF, NRVG…KMFF, VIFT…FAIV, IGIL…LFAG, VSYE…AGSF, LWNV…GVAV, FFVG…TLFF, LPPF…FILI, and VCLP…LWQA.

This sequence belongs to the complex I subunit 1 family. In terms of assembly, NDH-1 is composed of 13 different subunits. Subunits NuoA, H, J, K, L, M, N constitute the membrane sector of the complex.

The protein resides in the cell inner membrane. The enzyme catalyses a quinone + NADH + 5 H(+)(in) = a quinol + NAD(+) + 4 H(+)(out). Functionally, NDH-1 shuttles electrons from NADH, via FMN and iron-sulfur (Fe-S) centers, to quinones in the respiratory chain. The immediate electron acceptor for the enzyme in this species is believed to be ubiquinone. Couples the redox reaction to proton translocation (for every two electrons transferred, four hydrogen ions are translocated across the cytoplasmic membrane), and thus conserves the redox energy in a proton gradient. This subunit may bind ubiquinone. This is NADH-quinone oxidoreductase subunit H from Salmonella agona (strain SL483).